The chain runs to 195 residues: Recombination protein RecR (195 aa).

The segment at 54-69 adopts a C4-type zinc-finger fold; that stretch reads CTICGSYTEDEICSIC. The Toprim domain maps to 77-172; the sequence is ATICVVGFPQ…NITRLASGLP (96 aa).

This sequence belongs to the RecR family.

May play a role in DNA repair. It seems to be involved in an RecBC-independent recombinational process of DNA repair. It may act with RecF and RecO. This chain is Recombination protein RecR, found in Treponema denticola (strain ATCC 35405 / DSM 14222 / CIP 103919 / JCM 8153 / KCTC 15104).